Reading from the N-terminus, the 156-residue chain is SsrA-binding protein (156 aa).

Positions Tyr-134–Arg-156 are disordered.

The protein belongs to the SmpB family.

Its subcellular location is the cytoplasm. In terms of biological role, required for rescue of stalled ribosomes mediated by trans-translation. Binds to transfer-messenger RNA (tmRNA), required for stable association of tmRNA with ribosomes. tmRNA and SmpB together mimic tRNA shape, replacing the anticodon stem-loop with SmpB. tmRNA is encoded by the ssrA gene; the 2 termini fold to resemble tRNA(Ala) and it encodes a 'tag peptide', a short internal open reading frame. During trans-translation Ala-aminoacylated tmRNA acts like a tRNA, entering the A-site of stalled ribosomes, displacing the stalled mRNA. The ribosome then switches to translate the ORF on the tmRNA; the nascent peptide is terminated with the 'tag peptide' encoded by the tmRNA and targeted for degradation. The ribosome is freed to recommence translation, which seems to be the essential function of trans-translation. The chain is SsrA-binding protein from Latilactobacillus sakei subsp. sakei (strain 23K) (Lactobacillus sakei subsp. sakei).